Here is a 111-residue protein sequence, read N- to C-terminus: Large ribosomal subunit protein uL22 (111 aa).

Belongs to the universal ribosomal protein uL22 family. As to quaternary structure, part of the 50S ribosomal subunit.

Functionally, this protein binds specifically to 23S rRNA; its binding is stimulated by other ribosomal proteins, e.g. L4, L17, and L20. It is important during the early stages of 50S assembly. It makes multiple contacts with different domains of the 23S rRNA in the assembled 50S subunit and ribosome. Its function is as follows. The globular domain of the protein is located near the polypeptide exit tunnel on the outside of the subunit, while an extended beta-hairpin is found that lines the wall of the exit tunnel in the center of the 70S ribosome. The sequence is that of Large ribosomal subunit protein uL22 from Clostridium kluyveri (strain NBRC 12016).